The sequence spans 191 residues: dTTP/UTP pyrophosphatase (191 aa).

Aspartate 70 acts as the Proton acceptor in catalysis.

The protein belongs to the Maf family. YhdE subfamily. Requires a divalent metal cation as cofactor.

Its subcellular location is the cytoplasm. The enzyme catalyses dTTP + H2O = dTMP + diphosphate + H(+). It catalyses the reaction UTP + H2O = UMP + diphosphate + H(+). Functionally, nucleoside triphosphate pyrophosphatase that hydrolyzes dTTP and UTP. May have a dual role in cell division arrest and in preventing the incorporation of modified nucleotides into cellular nucleic acids. This Clostridium novyi (strain NT) protein is dTTP/UTP pyrophosphatase.